We begin with the raw amino-acid sequence, 194 residues long: MNDIDKHKKETQTESKNDLNNTTITQNNVSDDCQNQDKINSLKQKILEIKKHISEVKLREQAEIENINKNTKNKIKIIIDTQLENFFRNLIPIIDSLKNIRKDINKYNNIKDNNMIQGIPLILKSLLTVTEKFGLKINNKKGKLFDPKLHTTIPNENCKNINEYYVSEIIQDGYTFHEKIIRKAIVKLSKDKKT.

Over residues 1 to 17 (MNDIDKHKKETQTESKN) the composition is skewed to basic and acidic residues. Positions 1 to 29 (MNDIDKHKKETQTESKNDLNNTTITQNNV) are disordered. Positions 18 to 29 (DLNNTTITQNNV) are enriched in polar residues.

This sequence belongs to the GrpE family. Homodimer.

Its subcellular location is the cytoplasm. Functionally, participates actively in the response to hyperosmotic and heat shock by preventing the aggregation of stress-denatured proteins, in association with DnaK and GrpE. It is the nucleotide exchange factor for DnaK and may function as a thermosensor. Unfolded proteins bind initially to DnaJ; upon interaction with the DnaJ-bound protein, DnaK hydrolyzes its bound ATP, resulting in the formation of a stable complex. GrpE releases ADP from DnaK; ATP binding to DnaK triggers the release of the substrate protein, thus completing the reaction cycle. Several rounds of ATP-dependent interactions between DnaJ, DnaK and GrpE are required for fully efficient folding. This chain is Protein GrpE 2, found in Buchnera aphidicola subsp. Baizongia pistaciae (strain Bp).